We begin with the raw amino-acid sequence, 313 residues long: tRNA dimethylallyltransferase (313 aa).

Position 17–24 (glycine 17–threonine 24) interacts with ATP. Threonine 19–threonine 24 provides a ligand contact to substrate. Interaction with substrate tRNA regions lie at residues aspartate 42–leucine 45, glutamine 166–arginine 170, and arginine 247–arginine 252.

It belongs to the IPP transferase family. Monomer. Mg(2+) is required as a cofactor.

It catalyses the reaction adenosine(37) in tRNA + dimethylallyl diphosphate = N(6)-dimethylallyladenosine(37) in tRNA + diphosphate. In terms of biological role, catalyzes the transfer of a dimethylallyl group onto the adenine at position 37 in tRNAs that read codons beginning with uridine, leading to the formation of N6-(dimethylallyl)adenosine (i(6)A). This is tRNA dimethylallyltransferase from Yersinia pseudotuberculosis serotype O:1b (strain IP 31758).